Here is a 357-residue protein sequence, read N- to C-terminus: ADLYENPMGLMGFEFIELASPTPNTLEPIFEIMGFTKVATHRSKDVHLYRQGAINLILNNEPHSVASYFAAEHGPSVCGMAFRVKDSQKAYKRALELGAQPIHIETGPMELNLPAIKGIGGAPLYLIDRFGEGSSIYDIDFVFLEGVDRHPVGAGLKIIDHLTHNVYRGRMAYWANFYEKLFNFREIRYFDIKGEYTGLTSKAMTAPDGMIRIPLNEESSKGAGQIEEFLMQFNGEGIQHVAFLSDDLIKTWDHLKSIGMRFMTAPPDTYYEMLEGRLPNHGEPVGELQARGILLDGSSESGDKRLLLQIFSETLMGPVFFEFIQRKGDDGFGEGNFKALFESIERDQVRRGVLSTD.

VOC domains lie at G12 to R129 and I158 to E313. Fe cation is bound by residues H161, H240, and E322.

It belongs to the 4HPPD family. As to quaternary structure, homotetramer. Requires Fe cation as cofactor.

It carries out the reaction 3-(4-hydroxyphenyl)pyruvate + O2 = homogentisate + CO2. It participates in amino-acid degradation; L-phenylalanine degradation; acetoacetate and fumarate from L-phenylalanine: step 3/6. This chain is 4-hydroxyphenylpyruvate dioxygenase (hpd), found in Pseudomonas sp. (strain P.J. 874).